Consider the following 187-residue polypeptide: Rusticyanin (187 aa).

A signal peptide spans 1-32 (MYTQNTMKKNWYVTVGAAAALAATVGMGTAMA). A Plastocyanin-like domain is found at 85–187 (SFEVHDKKNP…TGMFGKIIVK (103 aa)). Cu cation is bound by residues His117, Cys170, His175, and Met180.

As to quaternary structure, monomer. Cu cation serves as cofactor.

Its subcellular location is the periplasm. Functionally, electron carrier from cytochrome c552 to the A-type oxidase. This chain is Rusticyanin (rus), found in Acidithiobacillus ferridurans.